The following is a 90-amino-acid chain: Protein LIM1 (90 aa).

The first 26 residues, methionine 1–serine 26, serve as a signal peptide directing secretion. 4 disulfide bridges follow: cysteine 29/cysteine 66, cysteine 39/cysteine 55, cysteine 56/cysteine 81, and cysteine 68/cysteine 88.

It belongs to the A9/FIL1 family.

The protein localises to the secreted. The sequence is that of Protein LIM1 (LIM1) from Lilium longiflorum (Trumpet lily).